Reading from the N-terminus, the 339-residue chain is MIETAIAQLTNQENLDFTMSQQVITEIMKGQATDAQIGSFLTALAIKKATIDEIAGAATAMRSQALPFKVKRPTLEIVGTGGDRSNSFNISTTTALVVAAAGVPVTKHGNRAASSKSGAADVLEALGIKIDLTPAQSLALLERTNFAFMYAREYHQAMRFVAPARQQIKIPTIFNILGPLANPAHAEMQLLGVYRQALMAPLAEVLTRLGVKHAMVVHSRDGLDEISAAAPTDVIVINHGQQVTRILTPEQFGLTRCDHAALIGGSAQVNAAITRAVLTGEPGAPRDVVLMNAAAALHIAKPQLDLAAAFELAQQTIDQGAAAAKLAQLIQSSQAVMAS.

5-phospho-alpha-D-ribose 1-diphosphate-binding positions include G79, 82-83, S87, 89-92, 107-115, and A119; these read GD, NIST, and KHGNRAASS. G79 contacts anthranilate. Mg(2+) is bound at residue S91. N110 contributes to the anthranilate binding site. An anthranilate-binding site is contributed by R165. The Mg(2+) site is built by D224 and E225.

It belongs to the anthranilate phosphoribosyltransferase family. As to quaternary structure, homodimer. Requires Mg(2+) as cofactor.

The enzyme catalyses N-(5-phospho-beta-D-ribosyl)anthranilate + diphosphate = 5-phospho-alpha-D-ribose 1-diphosphate + anthranilate. The protein operates within amino-acid biosynthesis; L-tryptophan biosynthesis; L-tryptophan from chorismate: step 2/5. Catalyzes the transfer of the phosphoribosyl group of 5-phosphorylribose-1-pyrophosphate (PRPP) to anthranilate to yield N-(5'-phosphoribosyl)-anthranilate (PRA). The sequence is that of Anthranilate phosphoribosyltransferase from Lactiplantibacillus plantarum (strain ATCC BAA-793 / NCIMB 8826 / WCFS1) (Lactobacillus plantarum).